The primary structure comprises 538 residues: ATP-dependent rRNA helicase RRP3 (538 aa).

Positions 1 to 11 (MSSAKRVKLSH) are enriched in basic residues. The disordered stretch occupies residues 1-112 (MSSAKRVKLS…SKEETPTKSF (112 aa)). Over residues 34 to 47 (KKITQAPKAAAPIK) the composition is skewed to low complexity. A compositionally biased stretch (acidic residues) spans 53-85 (AEEDDDDDDKDDKDEEDEEQNDDSSDEASENDD). The segment covering 92-112 (EATKEGQTELPSKEETPTKSF) has biased composition (basic and acidic residues). The Q motif signature appears at 110–138 (KSFRDLGIVEPLCEACEALKFKKPTPIQE). One can recognise a Helicase ATP-binding domain in the interval 141 to 312 (IPLALQGRDV…RASLRDPLKV (172 aa)). 154-161 (AETGSGKT) serves as a coordination point for ATP. Positions 260-263 (DEAD) match the DEAD box motif. The region spanning 336-486 (HKDVYLIYLA…LFQPDKEEVM (151 aa)) is the Helicase C-terminal domain. Over residues 498–512 (HAREEMKALHEDRGK) the composition is skewed to basic and acidic residues. Residues 498–538 (HAREEMKALHEDRGKKGAVLKGRKRGSATKRRHDDMDAEEG) form a disordered region. Residues 513-528 (KGAVLKGRKRGSATKR) show a composition bias toward basic residues.

It belongs to the DEAD box helicase family. DDX47/RRP3 subfamily. Interacts with the SSU processome.

It localises to the nucleus. It catalyses the reaction ATP + H2O = ADP + phosphate + H(+). ATP-dependent rRNA helicase required for pre-ribosomal RNA processing. Involved in the maturation of the 35S-pre-rRNA and to its cleavage to mature 18S rRNA. The chain is ATP-dependent rRNA helicase RRP3 from Pyricularia oryzae (strain 70-15 / ATCC MYA-4617 / FGSC 8958) (Rice blast fungus).